Reading from the N-terminus, the 240-residue chain is Caffeoyl-CoA O-methyltransferase 5 (240 aa).

Lys-14 is a substrate binding site. S-adenosyl-L-methionine contacts are provided by residues Thr-56, Glu-78, 80–81 (GV), Ser-86, Asp-104, and Ala-133. Position 156 (Asp-156) interacts with substrate. Asp-156 contacts a divalent metal cation. Asp-158 is a binding site for S-adenosyl-L-methionine. The a divalent metal cation site is built by Asp-182 and Asn-183. Asn-187 is a substrate binding site.

Belongs to the class I-like SAM-binding methyltransferase superfamily. Cation-dependent O-methyltransferase family. CCoAMT subfamily. It depends on Mg(2+) as a cofactor. In terms of tissue distribution, expression steadily increases from the bottom to the top of the plant.

The catalysed reaction is (E)-caffeoyl-CoA + S-adenosyl-L-methionine = (E)-feruloyl-CoA + S-adenosyl-L-homocysteine + H(+). It participates in aromatic compound metabolism; phenylpropanoid biosynthesis. Its function is as follows. Methylates caffeoyl-CoA to feruloyl-CoA and 5-hydroxyferuloyl-CoA to sinapoyl-CoA. Plays a role in the synthesis of feruloylated polysaccharides. Involved in the reinforcement of the plant cell wall. Also involved in the responding to wounding or pathogen challenge by the increased formation of cell wall-bound ferulic acid polymers. Methylates 5-hydroxyferulolyl-CoA more efficiently than caffeoyl-CoA. The sequence is that of Caffeoyl-CoA O-methyltransferase 5 (CCOAOMT5) from Nicotiana tabacum (Common tobacco).